The following is a 415-amino-acid chain: Beta-1,4-glucuronyltransferase 1 (415 aa).

Residues 1 to 8 (MQMSYAIR) are Cytoplasmic-facing. A helical; Signal-anchor for type II membrane protein membrane pass occupies residues 9–36 (CAFYQLLLAALMLVAMLQLLYLSLLSGL). Topologically, residues 37–415 (HGQEEQDQYF…AKYPDSPRHC (379 aa)) are lumenal. Asn204 carries N-linked (GlcNAc...) asparagine glycosylation. The Mn(2+) site is built by Asp227 and Asp229. The N-linked (GlcNAc...) asparagine glycan is linked to Asn300.

It belongs to the glycosyltransferase 49 family. In terms of assembly, interacts with LARGE1 and LARGE2. Mn(2+) serves as cofactor.

The protein resides in the golgi apparatus membrane. It carries out the reaction 3-O-[beta-D-Xyl-(1-&gt;4)-Rib-ol-P-Rib-ol-P-3-beta-D-GalNAc-(1-&gt;3)-beta-D-GlcNAc-(1-&gt;4)-(O-6-P-alpha-D-Man)]-Thr-[protein] + UDP-alpha-D-glucuronate = 3-O-[beta-D-GlcA-(1-&gt;3)-beta-D-Xyl-(1-&gt;4)-Rib-ol-P-Rib-ol-P-3-beta-D-GalNAc-(1-&gt;3)-beta-D-GlcNAc-(1-&gt;4)-(O-6-P-alpha-D-Man)]-Thr-[protein] + UDP + H(+). The protein operates within protein modification; protein glycosylation. Beta-1,4-glucuronyltransferase involved in O-mannosylation of alpha-dystroglycan (DAG1). Transfers a glucuronic acid (GlcA) residue onto a xylose (Xyl) acceptor to produce the glucuronyl-beta-1,4-xylose-beta disaccharide primer, which is further elongated by LARGE1, during synthesis of phosphorylated O-mannosyl glycan. Phosphorylated O-mannosyl glycan is a carbohydrate structure present in alpha-dystroglycan (DAG1), which is required for binding laminin G-like domain-containing extracellular proteins with high affinity. Required for axon guidance; via its function in O-mannosylation of alpha-dystroglycan (DAG1). The protein is Beta-1,4-glucuronyltransferase 1 of Bos taurus (Bovine).